A 229-amino-acid polypeptide reads, in one-letter code: Enolase-phosphatase E1 (229 aa).

The protein belongs to the HAD-like hydrolase superfamily. MasA/MtnC family. In terms of assembly, monomer. Requires Mg(2+) as cofactor.

It carries out the reaction 5-methylsulfanyl-2,3-dioxopentyl phosphate + H2O = 1,2-dihydroxy-5-(methylsulfanyl)pent-1-en-3-one + phosphate. It functions in the pathway amino-acid biosynthesis; L-methionine biosynthesis via salvage pathway; L-methionine from S-methyl-5-thio-alpha-D-ribose 1-phosphate: step 3/6. Its pathway is amino-acid biosynthesis; L-methionine biosynthesis via salvage pathway; L-methionine from S-methyl-5-thio-alpha-D-ribose 1-phosphate: step 4/6. Bifunctional enzyme that catalyzes the enolization of 2,3-diketo-5-methylthiopentyl-1-phosphate (DK-MTP-1-P) into the intermediate 2-hydroxy-3-keto-5-methylthiopentenyl-1-phosphate (HK-MTPenyl-1-P), which is then dephosphorylated to form the acireductone 1,2-dihydroxy-3-keto-5-methylthiopentene (DHK-MTPene). The protein is Enolase-phosphatase E1 of Yersinia pestis (strain Pestoides F).